The chain runs to 629 residues: tRNA uridine 5-carboxymethylaminomethyl modification enzyme MnmG (629 aa).

13–18 is an FAD binding site; the sequence is GGGHAG. 273–287 lines the NAD(+) pocket; it reads GPRYCPSIEDKIVRF.

Belongs to the MnmG family. In terms of assembly, homodimer. Heterotetramer of two MnmE and two MnmG subunits. Requires FAD as cofactor.

It localises to the cytoplasm. In terms of biological role, NAD-binding protein involved in the addition of a carboxymethylaminomethyl (cmnm) group at the wobble position (U34) of certain tRNAs, forming tRNA-cmnm(5)s(2)U34. The polypeptide is tRNA uridine 5-carboxymethylaminomethyl modification enzyme MnmG (Marinomonas sp. (strain MWYL1)).